Reading from the N-terminus, the 255-residue chain is Endonuclease V (255 aa).

Mg(2+)-binding residues include Asp42 and Asp110.

Belongs to the endonuclease V family. The cofactor is Mg(2+).

It localises to the cytoplasm. The catalysed reaction is Endonucleolytic cleavage at apurinic or apyrimidinic sites to products with a 5'-phosphate.. In terms of biological role, DNA repair enzyme involved in the repair of deaminated bases. Selectively cleaves double-stranded DNA at the second phosphodiester bond 3' to a deoxyinosine leaving behind the intact lesion on the nicked DNA. This Aeropyrum pernix (strain ATCC 700893 / DSM 11879 / JCM 9820 / NBRC 100138 / K1) protein is Endonuclease V.